The sequence spans 315 residues: Methionyl-tRNA formyltransferase (315 aa).

Residues Ser-2 to Asp-189 are N-terminal domain. Ser-113–Pro-116 lines the (6S)-5,6,7,8-tetrahydrofolate pocket. Residues Lys-210–Val-315 are C-terminal domain.

This sequence belongs to the Fmt family. In terms of assembly, monomer.

It catalyses the reaction L-methionyl-tRNA(fMet) + (6R)-10-formyltetrahydrofolate = N-formyl-L-methionyl-tRNA(fMet) + (6S)-5,6,7,8-tetrahydrofolate + H(+). Activity is optimum in the presence of Mg(2+) and K(+). Functionally, attaches a formyl group to the free amino group of methionyl-tRNA(fMet). The formyl group appears to play a dual role in the initiator identity of N-formylmethionyl-tRNA by promoting its recognition by IF2 and preventing the misappropriation of this tRNA by the elongation apparatus. In Escherichia coli (strain K12), this protein is Methionyl-tRNA formyltransferase.